A 250-amino-acid polypeptide reads, in one-letter code: tRNA (guanine-N(1)-)-methyltransferase (250 aa).

S-adenosyl-L-methionine contacts are provided by residues glycine 113 and 134-139 (IGDYVL).

It belongs to the RNA methyltransferase TrmD family. Homodimer.

The protein localises to the cytoplasm. The catalysed reaction is guanosine(37) in tRNA + S-adenosyl-L-methionine = N(1)-methylguanosine(37) in tRNA + S-adenosyl-L-homocysteine + H(+). In terms of biological role, specifically methylates guanosine-37 in various tRNAs. The chain is tRNA (guanine-N(1)-)-methyltransferase from Buchnera aphidicola subsp. Baizongia pistaciae (strain Bp).